Consider the following 252-residue polypeptide: MSRKPIIAGNWKMNKTLSEAQAFVEAVKNNLPSSDNVESVIGAPALFLAPMAYLRQGSELKLAAENSYFENAGAFTGENSPAAIVDLGIEYIIIGHSERREYFHETDEDINKKAKAIFAAGATPILCCGETLETFEAGKTAEWVSGQIEAGLAGLTAEQVSNLVIAYEPIWAIGTGKTATNEIADETCGVVRSTVEKLYGKEVSEAVRIQYGGSVKPETIEGLMAKENIDGALVGGASLEADSFLALLEMYK.

10-12 (NWK) is a substrate binding site. The active-site Electrophile is His-96. Glu-168 (proton acceptor) is an active-site residue. Substrate is bound by residues Gly-174, Ser-214, and 235–236 (GG).

This sequence belongs to the triosephosphate isomerase family. Homodimer.

It is found in the cytoplasm. The catalysed reaction is D-glyceraldehyde 3-phosphate = dihydroxyacetone phosphate. It participates in carbohydrate biosynthesis; gluconeogenesis. The protein operates within carbohydrate degradation; glycolysis; D-glyceraldehyde 3-phosphate from glycerone phosphate: step 1/1. Functionally, involved in the gluconeogenesis. Catalyzes stereospecifically the conversion of dihydroxyacetone phosphate (DHAP) to D-glyceraldehyde-3-phosphate (G3P). This is Triosephosphate isomerase from Lactococcus lactis subsp. cremoris (strain MG1363).